Reading from the N-terminus, the 102-residue chain is uncharacterized protein (102 aa).

The chain crosses the membrane as a helical span at residues 5-27 (IYRSNLVIVITLFVSLSYYHTCF).

The protein localises to the host membrane. This is an uncharacterized protein from Microplitis demolitor (Parasitoid wasp).